Here is a 620-residue protein sequence, read N- to C-terminus: Threonine--tRNA ligase (620 aa).

The tract at residues 1–141 is editing domain; it reads MKMLLIHSDY…LSRKIVAKEE (141 aa). Residues 197–496 form a catalytic region; that stretch reads PHVKFIKEKD…AEKGNAPMLP (300 aa). Cys-289, His-341, and His-465 together coordinate Zn(2+).

The protein belongs to the class-II aminoacyl-tRNA synthetase family. As to quaternary structure, homodimer. The cofactor is Zn(2+).

It localises to the cytoplasm. It catalyses the reaction tRNA(Thr) + L-threonine + ATP = L-threonyl-tRNA(Thr) + AMP + diphosphate + H(+). With respect to regulation, not inhibited by 1 uM borrelidin (BN); probably does not bind BN. Catalyzes the attachment of threonine to tRNA(Thr) in a two-step reaction: L-threonine is first activated by ATP to form Thr-AMP and then transferred to the acceptor end of tRNA(Thr). Also activates L-serine, but does not detectably transfer it to tRNA(Thr). Edits incorrectly charged L-seryl-tRNA(Thr) via its editing domain. Has no activity on correctly acylated L-seryl-tRNA(Ser) or L-threonyl-tRNA(Thr). Deacylates correctly charged glycyl-tRNA(Gly), but not glycyl-tRNA(Gly)(2'-dA76) (the terminal 2'-OH of tRNA adenine 76 has been dehydroxylated) nor the 2'-fluoro tRNA derivative, strongly suggesting the editing function is tRNA catalyzed. This chain is Threonine--tRNA ligase, found in Methanocaldococcus jannaschii (strain ATCC 43067 / DSM 2661 / JAL-1 / JCM 10045 / NBRC 100440) (Methanococcus jannaschii).